Consider the following 241-residue polypeptide: Biosynthetic peptidoglycan transglycosylase (241 aa).

A helical transmembrane segment spans residues 18 to 38 (GVIGIIALWMAGILIFAFLPV).

This sequence belongs to the glycosyltransferase 51 family.

It localises to the cell inner membrane. It carries out the reaction [GlcNAc-(1-&gt;4)-Mur2Ac(oyl-L-Ala-gamma-D-Glu-L-Lys-D-Ala-D-Ala)](n)-di-trans,octa-cis-undecaprenyl diphosphate + beta-D-GlcNAc-(1-&gt;4)-Mur2Ac(oyl-L-Ala-gamma-D-Glu-L-Lys-D-Ala-D-Ala)-di-trans,octa-cis-undecaprenyl diphosphate = [GlcNAc-(1-&gt;4)-Mur2Ac(oyl-L-Ala-gamma-D-Glu-L-Lys-D-Ala-D-Ala)](n+1)-di-trans,octa-cis-undecaprenyl diphosphate + di-trans,octa-cis-undecaprenyl diphosphate + H(+). It functions in the pathway cell wall biogenesis; peptidoglycan biosynthesis. Functionally, peptidoglycan polymerase that catalyzes glycan chain elongation from lipid-linked precursors. The sequence is that of Biosynthetic peptidoglycan transglycosylase from Yersinia pseudotuberculosis serotype IB (strain PB1/+).